A 116-amino-acid chain; its full sequence is Large ribosomal subunit protein uL24c (116 aa).

This sequence belongs to the universal ribosomal protein uL24 family. Part of the 50S ribosomal subunit.

The protein resides in the plastid. It localises to the chloroplast. Its function is as follows. One of two assembly initiator proteins, it binds directly to the 5'-end of the 23S rRNA, where it nucleates assembly of the 50S subunit. This Pyropia yezoensis (Susabi-nori) protein is Large ribosomal subunit protein uL24c (rpl24).